The sequence spans 198 residues: Peptide deformylase (198 aa).

Fe cation contacts are provided by Cys123 and His170. Glu171 is a catalytic residue. His174 contributes to the Fe cation binding site.

It belongs to the polypeptide deformylase family. It depends on Fe(2+) as a cofactor.

The catalysed reaction is N-terminal N-formyl-L-methionyl-[peptide] + H2O = N-terminal L-methionyl-[peptide] + formate. Its function is as follows. Removes the formyl group from the N-terminal Met of newly synthesized proteins. Requires at least a dipeptide for an efficient rate of reaction. N-terminal L-methionine is a prerequisite for activity but the enzyme has broad specificity at other positions. The protein is Peptide deformylase of Mycoplasmopsis pulmonis (strain UAB CTIP) (Mycoplasma pulmonis).